Here is a 249-residue protein sequence, read N- to C-terminus: Protein obstructor-E (249 aa).

A signal peptide spans 1 to 21 (MAKILISALLCVAMFGSMALG). One can recognise a Chitin-binding type-2 1 domain in the interval 22–80 (SPECPTPNGRFASGDQCDSYTECQDGTPVEKLCPDGLLFHQRTKATGECTYAPYSTCKE). Cysteines 54 and 70 form a disulfide. N-linked (GlcNAc...) asparagine glycosylation is present at asparagine 88. Chitin-binding type-2 domains follow at residues 90-148 (TEEC…SCNA) and 170-227 (VDVS…ECYA). 2 disulfides stabilise this stretch: cysteine 124/cysteine 137 and cysteine 203/cysteine 216.

Uniformly expressed throughout the cuticle of third instar larva.

It is found in the secreted. The protein resides in the extracellular space. The protein localises to the extracellular matrix. Chitin-binding protein that is important for the longitudinal contraction and lateral expansion of the larval cuticle during its conversion into the oval-shaped puparium case. Essential for survival to the second instar larval stage. Confers the orientated contractility and expandability of the larval cuticle by regulating the arrangement of chitin and the formation of supracellular ridges on the cuticle of third instar larvae. Essential for determining pupal body shape; required for the orientated shape change of the cuticle during metamorphosis which involves changes in the morphology of the supracellular ridges. In terms of biological role, mainly involved in regulating pupal shape. Functionally, mainly involved in larvae survival, possibly by maintaining the normal morphology of the larval hindgut during development. This Drosophila melanogaster (Fruit fly) protein is Protein obstructor-E.